The primary structure comprises 157 residues: RNA-binding protein 3 (157 aa).

Positions 6 to 84 constitute an RRM domain; sequence GKLFVGGLNF…RQIRVDHAGK (79 aa). The residue at position 47 (Arg47) is an Omega-N-methylarginine. Residues 81–157 are disordered; the sequence is HAGKSARGTR…GGNYRDNYDN (77 aa). The residue at position 105 (Arg105) is an Asymmetric dimethylarginine; alternate. Arg105 carries the dimethylated arginine; in A2780 ovarian carcinoma cell line modification. Arg105 bears the Omega-N-methylarginine; alternate mark. The segment covering 105–114 has biased composition (gly residues); it reads RGGGDQGYGS. An omega-N-methylarginine mark is found at Arg121 and Arg131. A Phosphoserine modification is found at Ser147. Phosphotyrosine is present on Tyr155.

In terms of assembly, interacts with RPL4. Associates with the 60S ribosomal subunits in an RNA-independent manner. Associates with ribosomes. In terms of processing, arg-105 is dimethylated, probably to asymmetric dimethylarginine. Phosphorylated.

The protein localises to the nucleus. It is found in the cytoplasm. It localises to the cell projection. Its subcellular location is the dendrite. In terms of biological role, cold-inducible mRNA binding protein that enhances global protein synthesis at both physiological and mild hypothermic temperatures. Reduces the relative abundance of microRNAs, when overexpressed. Enhances phosphorylation of translation initiation factors and active polysome formation. This chain is RNA-binding protein 3 (RBM3), found in Homo sapiens (Human).